A 413-amino-acid polypeptide reads, in one-letter code: 1-deoxy-D-xylulose 5-phosphate reductoisomerase (413 aa).

The NADPH site is built by Thr-28, Gly-29, Ser-30, Ile-31, Gly-54, Arg-55, Asn-56, and Asn-142. Position 143 (Lys-143) interacts with 1-deoxy-D-xylulose 5-phosphate. An NADPH-binding site is contributed by Glu-144. Asp-168 contributes to the Mn(2+) binding site. 4 residues coordinate 1-deoxy-D-xylulose 5-phosphate: Ser-169, Glu-170, Ser-194, and His-217. Glu-170 contacts Mn(2+). An NADPH-binding site is contributed by Gly-223. Positions 230, 235, 236, and 239 each coordinate 1-deoxy-D-xylulose 5-phosphate. Glu-239 provides a ligand contact to Mn(2+).

The protein belongs to the DXR family. Mg(2+) serves as cofactor. Mn(2+) is required as a cofactor.

The catalysed reaction is 2-C-methyl-D-erythritol 4-phosphate + NADP(+) = 1-deoxy-D-xylulose 5-phosphate + NADPH + H(+). It functions in the pathway isoprenoid biosynthesis; isopentenyl diphosphate biosynthesis via DXP pathway; isopentenyl diphosphate from 1-deoxy-D-xylulose 5-phosphate: step 1/6. Its function is as follows. Catalyzes the NADPH-dependent rearrangement and reduction of 1-deoxy-D-xylulose-5-phosphate (DXP) to 2-C-methyl-D-erythritol 4-phosphate (MEP). In Thermosynechococcus vestitus (strain NIES-2133 / IAM M-273 / BP-1), this protein is 1-deoxy-D-xylulose 5-phosphate reductoisomerase.